The following is a 650-amino-acid chain: MKAVLLLLCALGTAVAIPTSTRFLSDHSNPTTATLVTPEDATVPIAGVEATADIENHPSDKAEKPSALNSEEETHEQSTEQDKTYSFEVDLKDEEDGDGDLSVDPTEGTLTLDLQEGTSEPQQKSLPENGDFPATVSTSYVDPNQRANITKGKESQEQPVSDSHQQPNESSKQTQDLKAEESQTQDPDIPNEEEEEEEDEEEEEEEEPEDIGAPSDNQEEGKEPLEEQPTSKWEGNREQSDDTLEESSQPTQISKTEKHQSEQGNQGQESDSEAEGEDKAAGSKEHIPHTEQQDQEGKAGLEAIGNQKDTDEKAVSTEPTDAAVVPRSHGGAGDNGGGDDSKHGAGDDYFIPSQEFLEAERMHSLSYYLKYGGGEETTTGESENRREAADNQEAKKAESSPNAEPSDEGNSREHSAGSCTNFQCKRGHICKTDPQGKPHCVCQDPETCPPAKILDQACGTDNQTYASSCHLFATKCRLEGTKKGHQLQLDYFGACKSIPACTDFEVAQFPLRMRDWLKNILMQLYEPNPKHGGYLNEKQRSKVKKIYLDEKRLLAGDHPIELLLRDFKKNYHMYVYPVHWQFNELDQHPADRILTHSELAPLRASLVPMEHCITRFFEECDPNKDKHITLKEWGHCFGIKEEDIDENLLF.

Positions 1–16 (MKAVLLLLCALGTAVA) are cleaved as a signal peptide. The interval 51-352 (TADIENHPSD…HGAGDDYFIP (302 aa)) is disordered. Residues 54 to 64 (IENHPSDKAEK) show a composition bias toward basic and acidic residues. Serine 70, serine 78, and serine 86 each carry phosphoserine. Positions 75–85 (HEQSTEQDKTY) are enriched in basic and acidic residues. Residues 91–101 (LKDEEDGDGDL) show a composition bias toward acidic residues. Polar residues-rich tracts occupy residues 116-126 (EGTSEPQQKSL) and 135-148 (TVSTSYVDPNQRAN). The N-linked (GlcNAc...) asparagine glycan is linked to asparagine 148. Phosphoserine occurs at positions 155 and 163. The span at 157–174 (EQPVSDSHQQPNESSKQT) shows a compositional bias: polar residues. A glycan (N-linked (GlcNAc...) asparagine) is linked at asparagine 168. Acidic residues predominate over residues 189-210 (IPNEEEEEEEDEEEEEEEEPED). Position 272 is a phosphoserine (serine 272). Residues 277 to 299 (EDKAAGSKEHIPHTEQQDQEGKA) are compositionally biased toward basic and acidic residues. Position 353 is a phosphoserine (serine 353). The tract at residues 375–415 (EETTTGESENRREAADNQEAKKAESSPNAEPSDEGNSREHS) is disordered. Over residues 382 to 398 (SENRREAADNQEAKKAE) the composition is skewed to basic and acidic residues. Residue serine 406 is modified to Phosphoserine. In terms of domain architecture, Follistatin-like spans 418–440 (SCTNFQCKRGHICKTDPQGKPHC). Disulfide bonds link cysteine 419/cysteine 430, cysteine 424/cysteine 440, cysteine 442/cysteine 476, cysteine 448/cysteine 469, cysteine 458/cysteine 495, cysteine 501/cysteine 612, and cysteine 620/cysteine 636. Positions 436-497 (GKPHCVCQDP…QLDYFGACKS (62 aa)) constitute a Kazal-like domain. N-linked (GlcNAc...) asparagine glycosylation is present at asparagine 462. One can recognise an EF-hand domain in the interval 608–643 (PMEHCITRFFEECDPNKDKHITLKEWGHCFGIKEED). Positions 621, 623, 625, 627, and 632 each coordinate Ca(2+).

Belongs to the SPARC family. As to expression, highest expression in brain. Moderate levels in heart, adrenal gland, epididymis and lung. Low levels in kidney, eye, liver, spleen, submandibular gland and testis.

The protein localises to the secreted. It is found in the extracellular space. It localises to the extracellular matrix. The chain is SPARC-like protein 1 (Sparcl1) from Mus musculus (Mouse).